The following is a 187-amino-acid chain: Tetraheme c-type cytochrome CymA (187 aa).

The Cytoplasmic segment spans residues 1-12 (MNWRALFKPSAK). The chain crosses the membrane as a helical span at residues 13–33 (YSILALLVVGIVIGVVGYFAT). The Periplasmic segment spans residues 34-187 (QQTLHATSTD…KGVAHPYPKG (154 aa)). Residues Cys46, Cys49, His64, Cys75, Cys78, His79, Asp97, Cys136, Cys139, His140, Cys173, Cys176, His177, and His182 each coordinate heme c.

The protein belongs to the NapC/NirT/NrfH family. In terms of assembly, homodimer. Heme c is required as a cofactor.

It localises to the cell inner membrane. The enzyme catalyses a quinol + 2 Fe(III)-[cytochrome c](out) = a quinone + 2 Fe(II)-[cytochrome c](out) + 2 H(+)(out). With respect to regulation, spectroscopic studies suggest that CymA requires a non-heme cofactor for quinol oxidation. In terms of biological role, quinol dehydrogenase involved in several anaerobic electron transfer pathways. Acquires electrons from the membrane quinone pool and mediates their transfer to several periplasmic terminal reductases and redox shuttles, including the fumarate reductase FccA, the small tetraheme cytochrome (STC), the c-type cytochrome MtrA, the nitrate reductase NapA (either through NapB or directly), the nitrite reductase NrfA and probably also the DmsE subunit of dimethyl sulfoxide (DMSO) reductase. Required for growth on fumarate and on DMSO, and for the reduction of iron(III), manganese(IV), nitrite and nitrate. Not essential for growth on trimethylamine-N-oxide (TMAO). This chain is Tetraheme c-type cytochrome CymA, found in Shewanella oneidensis (strain ATCC 700550 / JCM 31522 / CIP 106686 / LMG 19005 / NCIMB 14063 / MR-1).